The chain runs to 135 residues: ARGOS-like protein (135 aa).

The organ Size Related (OSR) domain stretch occupies residues phenylalanine 71 to serine 122. Helical transmembrane passes span methionine 76–leucine 96 and proline 100–methionine 120.

It belongs to the plant organ size related (OSR) protein family. In terms of tissue distribution, expressed in cotyledons, roots, flowers, siliques and leaves.

The protein localises to the membrane. Its subcellular location is the nucleus. The protein resides in the cytoplasm. It is found in the endoplasmic reticulum. In terms of biological role, promotes cell expansion-dependent organ growth, probably via a brassinosteroids signaling pathway. Acts downstream of BRI1. The protein is ARGOS-like protein (ARL) of Arabidopsis thaliana (Mouse-ear cress).